The following is a 212-amino-acid chain: Regulatory protein RecX (212 aa).

This sequence belongs to the RecX family.

The protein localises to the cytoplasm. Modulates RecA activity. In Clostridium botulinum (strain Alaska E43 / Type E3), this protein is Regulatory protein RecX.